The chain runs to 413 residues: Aspartate aminotransferase, cytoplasmic (413 aa).

Gly39 and Trp141 together coordinate L-aspartate. Ser149 is subject to Phosphoserine. Asn195 contacts L-aspartate. Residue Lys259 is modified to N6-(pyridoxal phosphate)lysine. Residue Arg387 coordinates L-aspartate.

Belongs to the class-I pyridoxal-phosphate-dependent aminotransferase family. Homodimer. Pyridoxal 5'-phosphate serves as cofactor.

The protein localises to the cytoplasm. The catalysed reaction is L-aspartate + 2-oxoglutarate = oxaloacetate + L-glutamate. The enzyme catalyses L-cysteine + 2-oxoglutarate = 2-oxo-3-sulfanylpropanoate + L-glutamate. It catalyses the reaction (2S)-2-aminobutanoate + 2-oxoglutarate = 2-oxobutanoate + L-glutamate. It carries out the reaction 3-sulfino-L-alanine + 2-oxoglutarate = 3-sulfinopyruvate + L-glutamate. In terms of biological role, biosynthesis of L-glutamate from L-aspartate or L-cysteine. Important regulator of levels of glutamate, the major excitatory neurotransmitter of the vertebrate central nervous system. Acts as a scavenger of glutamate in brain neuroprotection. The aspartate aminotransferase activity is involved in hepatic glucose synthesis during development and in adipocyte glyceroneogenesis. Using L-cysteine as substrate, regulates levels of mercaptopyruvate, an important source of hydrogen sulfide. Mercaptopyruvate is converted into H(2)S via the action of 3-mercaptopyruvate sulfurtransferase (3MST). Hydrogen sulfide is an important synaptic modulator and neuroprotectant in the brain. The chain is Aspartate aminotransferase, cytoplasmic from Pan troglodytes (Chimpanzee).